We begin with the raw amino-acid sequence, 185 residues long: Guanosine deaminase (185 aa).

The CMP/dCMP-type deaminase domain maps to 28-142 (DSDHKFLTQA…AAIAIGFDDF (115 aa)). Zn(2+) is bound at residue H80. The Proton donor role is filled by E82. Zn(2+)-binding residues include C110 and C113.

This sequence belongs to the cytidine and deoxycytidylate deaminase family. In terms of tissue distribution, expressed in roots, leaves, flowers and siliques.

Its subcellular location is the cytoplasm. It is found in the nucleus. The enzyme catalyses guanosine + H2O + H(+) = xanthosine + NH4(+). Its function is as follows. Catalyzes the hydrolytic deamination of guanosine, producing xanthosine and ammonia. Deaminates exclusively guanosine and 2'-deoxyguanosine but no other aminated purines, pyrimidines, or pterines. Deamination of guanosine by GSDA is the only source of xanthosine production in Arabidopsis. This chain is Guanosine deaminase, found in Arabidopsis thaliana (Mouse-ear cress).